A 171-amino-acid chain; its full sequence is Ribosome maturation factor RimM (171 aa).

Positions 93–167 (DGVYYYKDIF…KVYVELMEGL (75 aa)) constitute a PRC barrel domain.

This sequence belongs to the RimM family. As to quaternary structure, binds ribosomal protein uS19.

It is found in the cytoplasm. In terms of biological role, an accessory protein needed during the final step in the assembly of 30S ribosomal subunit, possibly for assembly of the head region. Essential for efficient processing of 16S rRNA. May be needed both before and after RbfA during the maturation of 16S rRNA. It has affinity for free ribosomal 30S subunits but not for 70S ribosomes. In Lactobacillus helveticus (strain DPC 4571), this protein is Ribosome maturation factor RimM.